The following is a 293-amino-acid chain: Foldase protein PrsA 2 (293 aa).

A signal peptide spans 1–20; sequence MKKKLILGLVMMMALFSLAA. A lipid anchor (N-palmitoyl cysteine) is attached at C21. Residue C21 is the site of S-diacylglycerol cysteine attachment. The region spanning 135–226 is the PpiC domain; that stretch reads QPDITVSHIL…YGYHIIQMDK (92 aa).

It belongs to the PrsA family.

The protein resides in the cell membrane. It catalyses the reaction [protein]-peptidylproline (omega=180) = [protein]-peptidylproline (omega=0). Functionally, plays a major role in protein secretion by helping the post-translocational extracellular folding of several secreted proteins. This Listeria monocytogenes serotype 4b (strain F2365) protein is Foldase protein PrsA 2.